The sequence spans 1845 residues: Histone-lysine N-methyltransferase, H3 lysine-79 specific (1845 aa).

Residues 1 to 44 (MSTNSTPRKQKLSNSKSLQNSPISPTVKKTNSFPLGNNIPTNIN) show a composition bias toward polar residues. Disordered stretches follow at residues 1–67 (MSTN…NGIG), 83–306 (PPLP…NKWT), 450–470 (SHDI…NKNK), 486–571 (QKLK…TERK), 585–681 (RKER…NDSY), 741–767 (GETF…KKIE), 862–881 (QTTK…AETE), and 963–1102 (KDNP…SNSL). Low complexity-rich tracts occupy residues 52-67 (NNSN…NGIG), 90-162 (SSSS…QQEP), 191-226 (PSTP…SNNS), and 239-263 (NNNN…NNNN). Positions 268–280 (VIDDDDDDDDDEG) are enriched in acidic residues. Polar residues predominate over residues 282-294 (SIKSTHTSTQSTP). Residues 295–304 (IRDRRQRDNK) are compositionally biased toward basic and acidic residues. A compositionally biased stretch (low complexity) spans 453–464 (INNNNNNNNNNK). Over residues 585–679 (RKERERKERK…IEKERREKND (95 aa)) the composition is skewed to basic and acidic residues. A required for interaction with nucleosomes and DNA region spans residues 625–639 (KKKEKEKEKEKEKEK). Composition is skewed to low complexity over residues 750–763 (NNNN…NNNN), 862–877 (QTTK…TTTT), 972–1011 (NNNR…RNNN), and 1020–1067 (NNNN…NNTI). The span at 1069-1080 (KKIETIKKDINK) shows a compositional bias: basic and acidic residues. The segment covering 1084–1102 (KTTTTTSSSSSSTSSSNSL) has biased composition (low complexity). The 322-residue stretch at 1125 to 1446 (FDVGIGVPVT…KDSDIVTDQT (322 aa)) folds into the DOT1 domain. S-adenosyl-L-methionine is bound by residues 1251-1254 (YGEA), 1274-1283 (FCDIGCGIGN), and Glu1300. 5 disordered regions span residues 1463-1559 (LQLF…NKPI), 1610-1661 (RISP…SSND), 1735-1762 (HQKS…KKEQ), 1772-1791 (NYNN…NHNN), and 1799-1845 (TDLI…DNNK). Composition is skewed to low complexity over residues 1467–1522 (SSSS…TPNS), 1541–1556 (NNNN…NSNN), and 1610–1642 (RISP…SSSD). Positions 1643-1656 (NENDDDNGDDEDDS) are enriched in acidic residues. Basic residues predominate over residues 1745-1759 (RLSRKQKKLAKKNKK). Composition is skewed to low complexity over residues 1799–1817 (TDLI…INND) and 1835–1845 (KDYNNINDNNK).

This sequence belongs to the class I-like SAM-binding methyltransferase superfamily. DOT1 family.

It is found in the nucleus. It catalyses the reaction L-lysyl(79)-[histone H3] + 3 S-adenosyl-L-methionine = N(6),N(6),N(6)-trimethyl-L-lysyl(79)-[histone H3] + 3 S-adenosyl-L-homocysteine + 3 H(+). Functionally, histone methyltransferase that specifically methylates histone H3 to form H3K79me. This methylation is required for telomere silencing, correct growth and development, and for resistance to DNA damage induced by UV LIGHT. The sequence is that of Histone-lysine N-methyltransferase, H3 lysine-79 specific from Dictyostelium discoideum (Social amoeba).